Here is an 836-residue protein sequence, read N- to C-terminus: Protein PDC2 (836 aa).

Residues 64-139 (ELIRRRKRAN…VKKLNINITG (76 aa)) enclose the HTH CENPB-type domain. Residues 626–640 (TTSTSVVSDSPSGTT) show a composition bias toward low complexity. Residues 626-732 (TTSTSVVSDS…NVQFGNGAGS (107 aa)) form a disordered region. Positions 641–651 (QKYNNISTYPN) are enriched in polar residues. Residues 677-698 (GQELQNPQGQQQQEQQQQQQHQ) are compositionally biased toward low complexity. Residues 699-711 (MSGYNFSPISNIE) show a composition bias toward polar residues.

Functionally, essential for the synthesis of pyruvate decarboxylase. In Candida albicans (Yeast), this protein is Protein PDC2 (PDC2).